Here is a 298-residue protein sequence, read N- to C-terminus: Protease HtpX homolog (298 aa).

2 consecutive transmembrane segments (helical) span residues 14–34 (VVLL…AGYL) and 39–59 (YAMG…SMIF). Residue His143 coordinates Zn(2+). The active site involves Glu144. His147 lines the Zn(2+) pocket. 2 helical membrane-spanning segments follow: residues 158 to 178 (IAVA…RMLW) and 197 to 217 (IITL…ASLI). Position 226 (Glu226) interacts with Zn(2+).

The protein belongs to the peptidase M48B family. Zn(2+) is required as a cofactor.

It is found in the cell membrane. In Streptococcus pyogenes serotype M3 (strain SSI-1), this protein is Protease HtpX homolog.